The following is a 302-amino-acid chain: uncharacterized protein (302 aa).

An S4 RNA-binding domain is found at 19-90 (QWLFSVLKTA…GELDILFEDN (72 aa)). The active site involves aspartate 138. The disordered stretch occupies residues 182-205 (KGTINSPIGRDRSHPTRRRVSPGG).

The protein belongs to the pseudouridine synthase RluA family.

The catalysed reaction is a uridine in RNA = a pseudouridine in RNA. This is an uncharacterized protein from Bacillus subtilis (strain 168).